We begin with the raw amino-acid sequence, 73 residues long: Large ribosomal subunit protein bL31 (73 aa).

Belongs to the bacterial ribosomal protein bL31 family. Type A subfamily. In terms of assembly, part of the 50S ribosomal subunit.

Functionally, binds the 23S rRNA. This chain is Large ribosomal subunit protein bL31, found in Chelativorans sp. (strain BNC1).